The primary structure comprises 353 residues: Ribosomal RNA small subunit methyltransferase H (353 aa).

S-adenosyl-L-methionine contacts are provided by residues 39–41 (AGH), Asp58, Phe90, Asp108, and Gln115. The interval 334–353 (SEDGVRGAHGHRRRTQARRG) is disordered. The segment covering 341-353 (AHGHRRRTQARRG) has biased composition (basic residues).

The protein belongs to the methyltransferase superfamily. RsmH family.

The protein resides in the cytoplasm. It catalyses the reaction cytidine(1402) in 16S rRNA + S-adenosyl-L-methionine = N(4)-methylcytidine(1402) in 16S rRNA + S-adenosyl-L-homocysteine + H(+). Functionally, specifically methylates the N4 position of cytidine in position 1402 (C1402) of 16S rRNA. In Bifidobacterium animalis subsp. lactis (strain AD011), this protein is Ribosomal RNA small subunit methyltransferase H.